We begin with the raw amino-acid sequence, 508 residues long: Bifunctional purine biosynthesis protein PurH (508 aa).

Residues 1-144 (MTRALLSVSD…KNFAGVLPIV (144 aa)) form the MGS-like domain.

The protein belongs to the PurH family.

The catalysed reaction is (6R)-10-formyltetrahydrofolate + 5-amino-1-(5-phospho-beta-D-ribosyl)imidazole-4-carboxamide = 5-formamido-1-(5-phospho-D-ribosyl)imidazole-4-carboxamide + (6S)-5,6,7,8-tetrahydrofolate. It catalyses the reaction IMP + H2O = 5-formamido-1-(5-phospho-D-ribosyl)imidazole-4-carboxamide. Its pathway is purine metabolism; IMP biosynthesis via de novo pathway; 5-formamido-1-(5-phospho-D-ribosyl)imidazole-4-carboxamide from 5-amino-1-(5-phospho-D-ribosyl)imidazole-4-carboxamide (10-formyl THF route): step 1/1. It participates in purine metabolism; IMP biosynthesis via de novo pathway; IMP from 5-formamido-1-(5-phospho-D-ribosyl)imidazole-4-carboxamide: step 1/1. In Leuconostoc citreum (strain KM20), this protein is Bifunctional purine biosynthesis protein PurH.